Consider the following 431-residue polypeptide: 3-phosphoshikimate 1-carboxyvinyltransferase (431 aa).

3-phosphoshikimate-binding residues include K21, S22, and R26. Residue K21 participates in phosphoenolpyruvate binding. Phosphoenolpyruvate contacts are provided by G93 and R121. 3-phosphoshikimate-binding residues include S166, Q168, D318, and K345. Phosphoenolpyruvate is bound at residue Q168. D318 (proton acceptor) is an active-site residue. Residues R349 and R391 each contribute to the phosphoenolpyruvate site.

This sequence belongs to the EPSP synthase family. As to quaternary structure, monomer.

The protein resides in the cytoplasm. It carries out the reaction 3-phosphoshikimate + phosphoenolpyruvate = 5-O-(1-carboxyvinyl)-3-phosphoshikimate + phosphate. Its pathway is metabolic intermediate biosynthesis; chorismate biosynthesis; chorismate from D-erythrose 4-phosphate and phosphoenolpyruvate: step 6/7. Functionally, catalyzes the transfer of the enolpyruvyl moiety of phosphoenolpyruvate (PEP) to the 5-hydroxyl of shikimate-3-phosphate (S3P) to produce enolpyruvyl shikimate-3-phosphate and inorganic phosphate. The sequence is that of 3-phosphoshikimate 1-carboxyvinyltransferase from Sulfurihydrogenibium sp. (strain YO3AOP1).